We begin with the raw amino-acid sequence, 179 residues long: Large ribosomal subunit protein uL5 (179 aa).

This sequence belongs to the universal ribosomal protein uL5 family. As to quaternary structure, part of the 50S ribosomal subunit; part of the 5S rRNA/L5/L18/L25 subcomplex. Contacts the 5S rRNA and the P site tRNA. Forms a bridge to the 30S subunit in the 70S ribosome.

Its function is as follows. This is one of the proteins that bind and probably mediate the attachment of the 5S RNA into the large ribosomal subunit, where it forms part of the central protuberance. In the 70S ribosome it contacts protein S13 of the 30S subunit (bridge B1b), connecting the 2 subunits; this bridge is implicated in subunit movement. Contacts the P site tRNA; the 5S rRNA and some of its associated proteins might help stabilize positioning of ribosome-bound tRNAs. The sequence is that of Large ribosomal subunit protein uL5 from Haemophilus ducreyi (strain 35000HP / ATCC 700724).